The following is an 82-amino-acid chain: Opistoporin-1 (82 aa).

An N-terminal signal peptide occupies residues 1–22; sequence MNRKLLFVTLMVTMLVMQPSEG. A propeptide spanning residues 67–82 is cleaved from the precursor; sequence EAGQMPFDEFMDILYE.

As to expression, expressed by the venom gland.

The protein resides in the secreted. It is found in the target cell membrane. At high concentrations, acts as a pore former in cellular membranes and causes the leakage of the cells. At submicromolar concentrations, degranulates granulocytes and has a weak hemolytic activity against human erythrocytes. Also strongly inhibits the production of superoxide anions. Has a strong antibacterial activity against Gram-negative bacteria but is less active against Gram-positive bacteria. Also has antifungal activity. This is Opistoporin-1 from Opistophthalmus carinatus (African yellow leg scorpion).